The primary structure comprises 411 residues: MATALSPPRGPKLKGAPPSHYYESFLEKKGPCDQDYRKFWAGLQGLAICFYNSNRDLQPLEKLDLRLFSKLRDEALLGSSRDTAYHFSLVLRDQEVKFKVESLESCEMWKGFILTVVELRVPSNLTLLPGHLYMMAEVLTKEEVRRAAEVPWCFLQVSRLEAQLLLERYPECGNLLLRPGGDGKDSVSVTTRQILNGSPVVKHYKVKRAGSKYVIDVEDPFSCPSLEAVVNYFVTHTKRALVPFLLDEDYEKVLGFVDSDRENGESAWAVPSFRASGPALPANVLKPLPPVPVSVSSQEDKLPQLPPLPQLPDTDENYVTPIEDSPAAEYMNQDVSLSSQAVPLKPKKPARLPAKPPKPSVVPKPDLKAITSVWTRKLGGSSSQASSLVTRLGDITAELEEKLQKRRALEH.

The PH domain maps to 20–120 (HYYESFLEKK…GFILTVVELR (101 aa)). Residue Tyr22 is modified to Phosphotyrosine. The SH2 domain occupies 152 to 248 (WCFLQVSRLE…RALVPFLLDE (97 aa)). The residue at position 250 (Tyr250) is a Phosphotyrosine; by PTK6. The tract at residues 291–320 (VPVSVSSQEDKLPQLPPLPQLPDTDENYVT) is disordered. 2 positions are modified to phosphotyrosine: Tyr318 and Tyr330. The disordered stretch occupies residues 338-364 (SSQAVPLKPKKPARLPAKPPKPSVVPK). A coiled-coil region spans residues 390–410 (TRLGDITAELEEKLQKRRALE).

In terms of assembly, interacts with PTK6 and CSF1R. Phosphorylated on tyrosine. Phosphorylated by PTK6 at Tyr-250 modulates PTK6-mediated STAT3 activation. As to expression, widely expressed.

It localises to the cytoplasm. It is found in the membrane. Its function is as follows. Substrate of protein kinase PTK6. May play a regulatory role in the acute-phase response in systemic inflammation and may modulate STAT3 activity. In Mus musculus (Mouse), this protein is Signal-transducing adaptor protein 2 (Stap2).